The chain runs to 509 residues: Monocarboxylate transporter 9 (509 aa).

Topologically, residues 1 to 12 are cytoplasmic; that stretch reads MELKKSPDGGWG. The next 12 membrane-spanning stretches (helical) occupy residues 13–33, 53–73, 80–100, 102–122, 137–157, 164–184, 305–325, 342–362, 372–392, 398–418, 433–453, and 462–482; these read WVIVFVSFFTQFLCYGSPLAV, WVGSLASGVGLLASPVCSLCV, PVTIFSGFMVAGGLMLSSFAP, IYFLFFSYGIVVGLGCGLLYT, GLALGLISTGSSVGLFIYAAL, FYGLDGCLLIVGALALNILAC, VFSALFIAILLFDIGGFPPSL, IMPLISIIGIMTAVGKLLLGI, LYLYVATLIIMGLALCAIPFA, LALLSGILGFLTGNWSIFPYV, GILMFFAGLGNSLGPPIVGWF, and IAFYFSGFCVLLGGFILLLAA. Residues 483-509 lie on the Cytoplasmic side of the membrane; it reads LPSWDTCNKQLPKPAPTTFLYKVASNV.

It belongs to the major facilitator superfamily. Monocarboxylate porter (TC 2.A.1.13) family.

Its subcellular location is the cell membrane. It carries out the reaction creatine(in) = creatine(out). It catalyses the reaction (R)-carnitine(in) = (R)-carnitine(out). Its function is as follows. Extracellular pH-and Na(+)-sensitive low-affinity creatine transporter. Also functions as a pH-independent carnitine efflux transporter. This chain is Monocarboxylate transporter 9 (SLC16A9), found in Pongo abelii (Sumatran orangutan).